We begin with the raw amino-acid sequence, 254 residues long: Triosephosphate isomerase (254 aa).

A substrate-binding site is contributed by 9 to 11 (NWK). Residue histidine 95 is the Electrophile of the active site. Residue glutamate 167 is the Proton acceptor of the active site. Substrate-binding positions include glycine 173, serine 213, and 234 to 235 (GG).

It belongs to the triosephosphate isomerase family. As to quaternary structure, homodimer.

The protein resides in the cytoplasm. The enzyme catalyses D-glyceraldehyde 3-phosphate = dihydroxyacetone phosphate. Its pathway is carbohydrate biosynthesis; gluconeogenesis. The protein operates within carbohydrate degradation; glycolysis; D-glyceraldehyde 3-phosphate from glycerone phosphate: step 1/1. Involved in the gluconeogenesis. Catalyzes stereospecifically the conversion of dihydroxyacetone phosphate (DHAP) to D-glyceraldehyde-3-phosphate (G3P). The protein is Triosephosphate isomerase of Roseiflexus castenholzii (strain DSM 13941 / HLO8).